We begin with the raw amino-acid sequence, 109 residues long: Putative double-stranded DNA mimic protein plu2488 (109 aa).

Belongs to the putative dsDNA mimic protein family.

Functionally, may act as a double-stranded DNA (dsDNA) mimic. Probably regulates the activity of a dsDNA-binding protein. This chain is Putative double-stranded DNA mimic protein plu2488, found in Photorhabdus laumondii subsp. laumondii (strain DSM 15139 / CIP 105565 / TT01) (Photorhabdus luminescens subsp. laumondii).